A 583-amino-acid chain; its full sequence is L-galactono-1,4-lactone dehydrogenase 1, mitochondrial (583 aa).

The N-terminal 36 residues, 1–36 (MRRLLLAGILRRASSSPSSHHHLHLVRALSASSPLP), are a transit peptide targeting the mitochondrion. The propeptide at 37–78 (ASDADLRKYAGYALLLLGCGAATYYSFPLPPDALHKKAVPFK) is removed in mature form. The chain crosses the membrane as a helical span at residues 45–61 (YAGYALLLLGCGAATYY). Positions 95 to 266 (THEVHTRVLL…AEVTLQCVER (172 aa)) constitute an FAD-binding PCMH-type domain.

The cofactor is FAD.

The protein resides in the mitochondrion membrane. It catalyses the reaction L-galactono-1,4-lactone + 4 Fe(III)-[cytochrome c] = L-dehydroascorbate + 4 Fe(II)-[cytochrome c] + 5 H(+). It functions in the pathway cofactor biosynthesis; L-ascorbate biosynthesis. Functionally, involved in the biosynthesis of ascorbic acid. The sequence is that of L-galactono-1,4-lactone dehydrogenase 1, mitochondrial (GLDH1) from Oryza sativa subsp. japonica (Rice).